The chain runs to 396 residues: 3-hydroxykynurenine transaminase (396 aa).

Residues 43–44 form a binds to and confers specificity for 3-hydroxykynurenine; shared with dimeric partner region; it reads SN. Pyridoxal 5'-phosphate-binding positions include 77–79, Ser154, and Gln204; that span reads SAH. Ser154 provides a ligand contact to substrate. Lys205 is subject to N6-(pyridoxal phosphate)lysine. Pyridoxal 5'-phosphate-binding residues include Tyr256 and Thr259. Arg356 serves as a coordination point for substrate.

It belongs to the class-V pyridoxal-phosphate-dependent aminotransferase family. As to quaternary structure, homodimer. The cofactor is pyridoxal 5'-phosphate. Expressed in gut and ovaries.

The protein resides in the peroxisome. It carries out the reaction L-kynurenine + glyoxylate = kynurenate + glycine + H2O. It catalyses the reaction 3-hydroxy-L-kynurenine + glyoxylate = xanthurenate + glycine + H2O. The catalysed reaction is 3-hydroxy-L-kynurenine + pyruvate = xanthurenate + L-alanine + H2O. The enzyme catalyses glyoxylate + L-alanine = glycine + pyruvate. It participates in amino-acid degradation; L-kynurenine degradation; kynurenate from L-kynurenine: step 1/2. Catalyzes the pyridoxal 5'-phosphate-dependent transamination of both 3-hydroxykynurenine and L-kynurenine to xanthurenic acid and kynurenic acid, respectively, preferentially using the alpha-ketoacid glyoxylate as the amino group acceptor. Although glyoxylate is the preferred amino group acceptor, transamination of 3-hydroxykynurenine also works with pyruvate as the amino acceptor in vitro. Involved in the detoxification of cytotoxic metabolite 3-hydroxykynurenine generated by the hydroxylation of L-kynurenine, an intermediate in the tryptophan catabolism pathway. The Plasmodium parasite uses xanthurenic acid produced in the midgut to activate its gametocytes ingested during a blood meal. Also catalyzes, although with a lesser efficiency, the transamination of alanine with glyoxylate as an amino group acceptor. May play a role in the detoxification of glyoxylate, a toxic plant metabolite from the diet. The polypeptide is 3-hydroxykynurenine transaminase (Anopheles gambiae (African malaria mosquito)).